The sequence spans 407 residues: Formate-dependent phosphoribosylglycinamide formyltransferase (407 aa).

N(1)-(5-phospho-beta-D-ribosyl)glycinamide-binding positions include 28–29 and Glu-88; that span reads EL. ATP contacts are provided by residues Arg-121, Lys-162, 167 to 172, 202 to 205, and Glu-210; these read SSGKGQ and EGFI. The ATP-grasp domain maps to 126-320; it reads RLAAEELGVA…EFELHAKAIL (195 aa). Residues Glu-279 and Glu-291 each contribute to the Mg(2+) site. N(1)-(5-phospho-beta-D-ribosyl)glycinamide contacts are provided by residues Asp-298, Lys-367, and 374–375; that span reads RR.

The protein belongs to the PurK/PurT family. In terms of assembly, homodimer.

The enzyme catalyses N(1)-(5-phospho-beta-D-ribosyl)glycinamide + formate + ATP = N(2)-formyl-N(1)-(5-phospho-beta-D-ribosyl)glycinamide + ADP + phosphate + H(+). The protein operates within purine metabolism; IMP biosynthesis via de novo pathway; N(2)-formyl-N(1)-(5-phospho-D-ribosyl)glycinamide from N(1)-(5-phospho-D-ribosyl)glycinamide (formate route): step 1/1. Its function is as follows. Involved in the de novo purine biosynthesis. Catalyzes the transfer of formate to 5-phospho-ribosyl-glycinamide (GAR), producing 5-phospho-ribosyl-N-formylglycinamide (FGAR). Formate is provided by PurU via hydrolysis of 10-formyl-tetrahydrofolate. The sequence is that of Formate-dependent phosphoribosylglycinamide formyltransferase from Herminiimonas arsenicoxydans.